Reading from the N-terminus, the 256-residue chain is 5-keto-4-deoxy-D-glucarate aldolase (256 aa).

The active-site Proton acceptor is histidine 50. Residue glutamine 151 coordinates substrate. Residue glutamate 153 participates in Mg(2+) binding. 2 residues coordinate substrate: serine 178 and aspartate 179. A Mg(2+)-binding site is contributed by aspartate 179.

Belongs to the HpcH/HpaI aldolase family. KDGluc aldolase subfamily. In terms of assembly, homohexamer; trimer of dimers. Mg(2+) is required as a cofactor.

The enzyme catalyses 5-dehydro-4-deoxy-D-glucarate = 2-hydroxy-3-oxopropanoate + pyruvate. It catalyses the reaction 2-dehydro-3-deoxy-D-glucarate = 2-hydroxy-3-oxopropanoate + pyruvate. The protein operates within carbohydrate acid metabolism; galactarate degradation; D-glycerate from galactarate: step 2/3. Catalyzes the reversible retro-aldol cleavage of both 5-keto-4-deoxy-D-glucarate and 2-keto-3-deoxy-D-glucarate to pyruvate and tartronic semialdehyde. The sequence is that of 5-keto-4-deoxy-D-glucarate aldolase from Salmonella paratyphi C (strain RKS4594).